The following is a 339-amino-acid chain: tRNA N6-adenosine threonylcarbamoyltransferase (339 aa).

2 residues coordinate Fe cation: histidine 111 and histidine 115. Substrate-binding positions include 139 to 143 (LVSGG), aspartate 172, glycine 185, aspartate 189, and asparagine 280. Aspartate 308 lines the Fe cation pocket.

The protein belongs to the KAE1 / TsaD family. Fe(2+) serves as cofactor.

The protein resides in the cytoplasm. It catalyses the reaction L-threonylcarbamoyladenylate + adenosine(37) in tRNA = N(6)-L-threonylcarbamoyladenosine(37) in tRNA + AMP + H(+). Required for the formation of a threonylcarbamoyl group on adenosine at position 37 (t(6)A37) in tRNAs that read codons beginning with adenine. Is involved in the transfer of the threonylcarbamoyl moiety of threonylcarbamoyl-AMP (TC-AMP) to the N6 group of A37, together with TsaE and TsaB. TsaD likely plays a direct catalytic role in this reaction. In Phocaeicola vulgatus (strain ATCC 8482 / DSM 1447 / JCM 5826 / CCUG 4940 / NBRC 14291 / NCTC 11154) (Bacteroides vulgatus), this protein is tRNA N6-adenosine threonylcarbamoyltransferase.